The chain runs to 370 residues: Probable endopolygalacturonase A (370 aa).

Positions 1–19 (MPSAKPLFCLATLAGAALA) are cleaved as a signal peptide. The propeptide occupies 20–32 (APAPSRVSDFTKR). Cysteine 35 and cysteine 50 are oxidised to a cystine. PbH1 repeat units lie at residues 162–192 (SDNL…DISE), 193–214 (STYI…AINS), 215–235 (GENI…SIGS), 244–265 (VKNV…RIKT), 273–295 (VEDI…VIEQ), and 307–352 (SNGV…DITG). The active-site Proton donor is the aspartate 207. Cysteine 209 and cysteine 225 are joined by a disulfide. Histidine 229 is a catalytic residue. The N-linked (GlcNAc...) asparagine glycan is linked to asparagine 246. 2 disulfide bridges follow: cysteine 335/cysteine 340 and cysteine 359/cysteine 368.

This sequence belongs to the glycosyl hydrolase 28 family.

The protein localises to the secreted. The catalysed reaction is (1,4-alpha-D-galacturonosyl)n+m + H2O = (1,4-alpha-D-galacturonosyl)n + (1,4-alpha-D-galacturonosyl)m.. Involved in maceration and soft-rotting of plant tissue. Hydrolyzes the 1,4-alpha glycosidic bonds of de-esterified pectate in the smooth region of the plant cell wall. This chain is Probable endopolygalacturonase A (pgaA), found in Aspergillus niger (strain ATCC MYA-4892 / CBS 513.88 / FGSC A1513).